The chain runs to 185 residues: Avirulence protein ATR39-1 (185 aa).

Residues 1–20 form the signal peptide; the sequence is MVKCTPLLALTVIVSAGSDA. The short motif at 49–66 is the RxLR-dEER element; sequence RVLRASDVPDEVAAGESR.

The protein belongs to the RxLR effector family.

Its subcellular location is the secreted. It localises to the host cell. In terms of biological role, secreted effector that acts as an elicitor of hypersensitive response (HR) specifically on plants carrying defense protein RPP39. The allele ATR39-1 is recognized by RPP39, whereas the ATR39-2 allele is not recognized. In Hyaloperonospora arabidopsidis (strain Emoy2) (Downy mildew agent), this protein is Avirulence protein ATR39-1.